The sequence spans 148 residues: Ribosomal RNA large subunit methyltransferase H 2 (148 aa).

Residues Leu74, Gly106, and Phe125–Phe130 each bind S-adenosyl-L-methionine.

The protein belongs to the RNA methyltransferase RlmH family. Homodimer.

Its subcellular location is the cytoplasm. The catalysed reaction is pseudouridine(1915) in 23S rRNA + S-adenosyl-L-methionine = N(3)-methylpseudouridine(1915) in 23S rRNA + S-adenosyl-L-homocysteine + H(+). Its function is as follows. Specifically methylates the pseudouridine at position 1915 (m3Psi1915) in 23S rRNA. The sequence is that of Ribosomal RNA large subunit methyltransferase H 2 from Caldanaerobacter subterraneus subsp. tengcongensis (strain DSM 15242 / JCM 11007 / NBRC 100824 / MB4) (Thermoanaerobacter tengcongensis).